A 347-amino-acid polypeptide reads, in one-letter code: UDP-3-O-acylglucosamine N-acyltransferase (347 aa).

His245 functions as the Proton acceptor in the catalytic mechanism.

Belongs to the transferase hexapeptide repeat family. LpxD subfamily. In terms of assembly, homotrimer.

The catalysed reaction is a UDP-3-O-[(3R)-3-hydroxyacyl]-alpha-D-glucosamine + a (3R)-hydroxyacyl-[ACP] = a UDP-2-N,3-O-bis[(3R)-3-hydroxyacyl]-alpha-D-glucosamine + holo-[ACP] + H(+). It functions in the pathway bacterial outer membrane biogenesis; LPS lipid A biosynthesis. Catalyzes the N-acylation of UDP-3-O-acylglucosamine using 3-hydroxyacyl-ACP as the acyl donor. Is involved in the biosynthesis of lipid A, a phosphorylated glycolipid that anchors the lipopolysaccharide to the outer membrane of the cell. The polypeptide is UDP-3-O-acylglucosamine N-acyltransferase (Chromohalobacter salexigens (strain ATCC BAA-138 / DSM 3043 / CIP 106854 / NCIMB 13768 / 1H11)).